A 1070-amino-acid polypeptide reads, in one-letter code: Carbamoyl phosphate synthase large chain (1070 aa).

Residues 1–401 (MPKRDDIKTI…ALLKAVRSLE (401 aa)) form a carboxyphosphate synthetic domain region. Positions 129, 169, 175, 176, 208, 210, 215, 241, 242, 243, 284, and 298 each coordinate ATP. The region spanning 133-327 (RDLMNELGEP…IAKLAAKIAV (195 aa)) is the ATP-grasp 1 domain. Mg(2+) is bound by residues Gln-284, Glu-298, and Asn-300. Mn(2+)-binding residues include Gln-284, Glu-298, and Asn-300. An oligomerization domain region spans residues 402 to 546 (VGADHLLLEE…YSTYEEENES (145 aa)). The interval 547-929 (TRSAKESVIV…ALYKGFVASG (383 aa)) is carbamoyl phosphate synthetic domain. The ATP-grasp 2 domain occupies 671–861 (EKALEILQIP…MANVATRVIL (191 aa)). ATP-binding residues include Arg-707, Arg-746, Val-748, Glu-752, Gly-777, Val-778, His-779, Ser-780, Gln-820, and Glu-832. Mg(2+)-binding residues include Gln-820, Glu-832, and Asn-834. Positions 820, 832, and 834 each coordinate Mn(2+). The 141-residue stretch at 930–1070 (TTMHDYGTVL…SEVKQPKVRV (141 aa)) folds into the MGS-like domain. The segment at 930–1070 (TTMHDYGTVL…SEVKQPKVRV (141 aa)) is allosteric domain.

It belongs to the CarB family. In terms of assembly, composed of two chains; the small (or glutamine) chain promotes the hydrolysis of glutamine to ammonia, which is used by the large (or ammonia) chain to synthesize carbamoyl phosphate. Tetramer of heterodimers (alpha,beta)4. Requires Mg(2+) as cofactor. The cofactor is Mn(2+).

It catalyses the reaction hydrogencarbonate + L-glutamine + 2 ATP + H2O = carbamoyl phosphate + L-glutamate + 2 ADP + phosphate + 2 H(+). The enzyme catalyses hydrogencarbonate + NH4(+) + 2 ATP = carbamoyl phosphate + 2 ADP + phosphate + 2 H(+). Its pathway is amino-acid biosynthesis; L-arginine biosynthesis; carbamoyl phosphate from bicarbonate: step 1/1. The protein operates within pyrimidine metabolism; UMP biosynthesis via de novo pathway; (S)-dihydroorotate from bicarbonate: step 1/3. Large subunit of the glutamine-dependent carbamoyl phosphate synthetase (CPSase). CPSase catalyzes the formation of carbamoyl phosphate from the ammonia moiety of glutamine, carbonate, and phosphate donated by ATP, constituting the first step of 2 biosynthetic pathways, one leading to arginine and/or urea and the other to pyrimidine nucleotides. The large subunit (synthetase) binds the substrates ammonia (free or transferred from glutamine from the small subunit), hydrogencarbonate and ATP and carries out an ATP-coupled ligase reaction, activating hydrogencarbonate by forming carboxy phosphate which reacts with ammonia to form carbamoyl phosphate. This chain is Carbamoyl phosphate synthase large chain, found in Listeria welshimeri serovar 6b (strain ATCC 35897 / DSM 20650 / CCUG 15529 / CIP 8149 / NCTC 11857 / SLCC 5334 / V8).